Here is a 242-residue protein sequence, read N- to C-terminus: MSFSEDQAMEEAKLRNDETEEQDPVVRTYPVFFSPGLRNNLLLNQFPLRPKNRTYSDANGEAPIDVRVKPKTGWMEVDVPIPTTKYYNEDKAMKYGNGKKPIQTQTLSGRLQKPRTNLMVGLIRDGQFHIVPLRGLTQLRPSMKHVNEYTQKLKAAAGPSNSSSGTSTPRGPIRAVQVTAKQNTEAPKVSTTHIVRATEEEEWVELDCRPERESESILKQLECPIEHQPNECAAVDEDYSFI.

2 disordered regions span residues 1–22 and 153–172; these read MSFSEDQAMEEAKLRNDETEEQ and LKAAAGPSNSSSGTSTPRGP. Residues 155-172 show a composition bias toward low complexity; sequence AAAGPSNSSSGTSTPRGP.

As to quaternary structure, component of the RNA polymerase III (Pol III) complex consisting of 17 subunits.

The protein resides in the cytoplasm. Its subcellular location is the nucleus. In terms of biological role, DNA-dependent RNA polymerase catalyzes the transcription of DNA into RNA using the four ribonucleoside triphosphates as substrates. Specific peripheric component of RNA polymerase III which synthesizes small RNAs, such as 5S rRNA and tRNAs. The RPC53/RPC4-RPC37/RPC5 subcomplex is required for terminator recognition and reinitiation. The protein is DNA-directed RNA polymerase III subunit rpc5 (rpc37) of Schizosaccharomyces pombe (strain 972 / ATCC 24843) (Fission yeast).